A 527-amino-acid chain; its full sequence is Peptide chain release factor 3 (527 aa).

The 269-residue stretch at 9–277 folds into the tr-type G domain; that stretch reads AKRRTFAIIS…AVVDWAPKPL (269 aa). Residues 18-25, 86-90, and 140-143 each bind GTP; these read SHPDAGKT, DTPGH, and NKLD.

This sequence belongs to the TRAFAC class translation factor GTPase superfamily. Classic translation factor GTPase family. PrfC subfamily.

It is found in the cytoplasm. Its function is as follows. Increases the formation of ribosomal termination complexes and stimulates activities of RF-1 and RF-2. It binds guanine nucleotides and has strong preference for UGA stop codons. It may interact directly with the ribosome. The stimulation of RF-1 and RF-2 is significantly reduced by GTP and GDP, but not by GMP. The polypeptide is Peptide chain release factor 3 (Stutzerimonas stutzeri (strain A1501) (Pseudomonas stutzeri)).